The following is a 247-amino-acid chain: tRNA pseudouridine synthase A (247 aa).

D53 (nucleophile) is an active-site residue. Y112 is a binding site for substrate.

This sequence belongs to the tRNA pseudouridine synthase TruA family. In terms of assembly, homodimer.

It catalyses the reaction uridine(38/39/40) in tRNA = pseudouridine(38/39/40) in tRNA. In terms of biological role, formation of pseudouridine at positions 38, 39 and 40 in the anticodon stem and loop of transfer RNAs. This chain is tRNA pseudouridine synthase A, found in Anaplasma marginale (strain Florida).